Here is a 178-residue protein sequence, read N- to C-terminus: Peptide deformylase 2 (178 aa).

Fe cation contacts are provided by Cys101 and His143. Glu144 is a catalytic residue. His147 is a binding site for Fe cation.

This sequence belongs to the polypeptide deformylase family. The cofactor is Fe(2+).

It catalyses the reaction N-terminal N-formyl-L-methionyl-[peptide] + H2O = N-terminal L-methionyl-[peptide] + formate. Its function is as follows. Removes the formyl group from the N-terminal Met of newly synthesized proteins. Requires at least a dipeptide for an efficient rate of reaction. N-terminal L-methionine is a prerequisite for activity but the enzyme has broad specificity at other positions. In Pseudomonas putida (strain ATCC 47054 / DSM 6125 / CFBP 8728 / NCIMB 11950 / KT2440), this protein is Peptide deformylase 2.